The sequence spans 377 residues: Succinyl-diaminopimelate desuccinylase (377 aa).

A Zn(2+)-binding site is contributed by histidine 66. Aspartate 68 is an active-site residue. Aspartate 99 contributes to the Zn(2+) binding site. Glutamate 133 (proton acceptor) is an active-site residue. The Zn(2+) site is built by glutamate 134, glutamate 162, and histidine 348.

The protein belongs to the peptidase M20A family. DapE subfamily. In terms of assembly, homodimer. Zn(2+) is required as a cofactor. Co(2+) serves as cofactor.

The catalysed reaction is N-succinyl-(2S,6S)-2,6-diaminopimelate + H2O = (2S,6S)-2,6-diaminopimelate + succinate. It participates in amino-acid biosynthesis; L-lysine biosynthesis via DAP pathway; LL-2,6-diaminopimelate from (S)-tetrahydrodipicolinate (succinylase route): step 3/3. In terms of biological role, catalyzes the hydrolysis of N-succinyl-L,L-diaminopimelic acid (SDAP), forming succinate and LL-2,6-diaminopimelate (DAP), an intermediate involved in the bacterial biosynthesis of lysine and meso-diaminopimelic acid, an essential component of bacterial cell walls. The chain is Succinyl-diaminopimelate desuccinylase from Methylococcus capsulatus (strain ATCC 33009 / NCIMB 11132 / Bath).